We begin with the raw amino-acid sequence, 102 residues long: Small ribosomal subunit protein uS10 (102 aa).

Belongs to the universal ribosomal protein uS10 family. Part of the 30S ribosomal subunit.

Its function is as follows. Involved in the binding of tRNA to the ribosomes. In Macrococcus caseolyticus (strain JCSC5402) (Macrococcoides caseolyticum), this protein is Small ribosomal subunit protein uS10.